Consider the following 1298-residue polypeptide: Histone-lysine N-methyltransferase EHMT1 (1298 aa).

Disordered regions lie at residues 1–111 and 144–192; these read MAAA…HVTA and ASSL…RKLP. At Ala-2 the chain carries N-acetylalanine. Residue Lys-22 forms a Glycyl lysine isopeptide (Lys-Gly) (interchain with G-Cter in SUMO1); alternate linkage. Lys-22 participates in a covalent cross-link: Glycyl lysine isopeptide (Lys-Gly) (interchain with G-Cter in SUMO2); alternate. Positions 38–50 are enriched in basic and acidic residues; sequence SAEKQAGEAHMAA. 2 stretches are compositionally biased toward polar residues: residues 54-67 and 76-89; these read TNGS…SSHA and SARV…NTLT. Residues 96–105 show a composition bias toward basic and acidic residues; it reads VSERDSEAAK. Glycyl lysine isopeptide (Lys-Gly) (interchain with G-Cter in SUMO2) cross-links involve residues Lys-190, Lys-199, Lys-231, Lys-234, Lys-317, and Lys-327. Positions 211–234 are disordered; the sequence is VVGLHAASKDPREVREARDHKEPK. Residues 217 to 234 show a composition bias toward basic and acidic residues; sequence ASKDPREVREARDHKEPK. Residues 339–479 form a disordered region; the sequence is VNGESLEMDS…QTAPGDSTGY (141 aa). Acidic residues predominate over residues 344 to 360; it reads LEMDSDEDDSEELEEDD. Over residues 373–393 the composition is skewed to basic and acidic residues; that stretch reads EDSRTSKESMSEADRAQKMDG. Residues 394–416 are compositionally biased toward acidic residues; it reads ESEEEQESVDTGEEEEGGDESDL. Residue Lys-432 forms a Glycyl lysine isopeptide (Lys-Gly) (interchain with G-Cter in SUMO2) linkage. Ser-435 bears the Phosphoserine mark. Residues 440-452 are compositionally biased toward basic residues; sequence PARKRRRRSRKKP. The span at 460-474 shows a compositional bias: polar residues; it reads SYKSSAGSAEQTAPG. Residue Ser-483 is modified to Phosphoserine. Residues Lys-492, Lys-559, Lys-644, Lys-659, Lys-684, and Lys-731 each participate in a glycyl lysine isopeptide (Lys-Gly) (interchain with G-Cter in SUMO2) cross-link. The segment at 644–717 is disordered; it reads KADTTSTVTP…TPGLSQGPGK (74 aa). ANK repeat units follow at residues 737–766, 772–801, 805–834, 838–868, 872–901, 905–934, 938–967, and 971–1004; these read FHPK…DPNF, NKRS…NIDT, DQRT…LVDP, EGST…DVNC, GGWT…DINI, EENI…DLHA, HGDS…DVTL, and EGET…DRPS. Positions 905–907 are histone H3K9me binding; sequence EEN. Ser-1004 and Ser-1048 each carry phosphoserine. The 64-residue stretch at 1060–1123 folds into the Pre-SET domain; the sequence is QYCVCIDDCS…NCRNRVVQNG (64 aa). Positions 1062, 1064, 1068, 1073, 1075, 1105, 1109, 1111, and 1115 each coordinate Zn(2+). The SET domain occupies 1126 to 1243; the sequence is ARLQLYRTRD…AGEQLGFDYG (118 aa). Residues 1136 to 1138, Tyr-1173, and 1200 to 1201 each bind S-adenosyl-L-methionine; these read MGW and NH. An interaction with histone H3 region spans residues 1162–1181; sequence DSEADVREEDSYLFDLDNKD. Position 1203 (Cys-1203) interacts with Zn(2+). The tract at residues 1242 to 1245 is interaction with histone H3; it reads YGER. Cys-1256 lines the Zn(2+) pocket. Arg-1257 serves as a coordination point for S-adenosyl-L-methionine. Residues Cys-1258 and Cys-1263 each coordinate Zn(2+). The tract at residues 1274–1298 is disordered; that stretch reads QASAAQEAQEDGLPDTSSAAAADPL.

The protein belongs to the class V-like SAM-binding methyltransferase superfamily. Heterodimer; heterodimerizes with EHMT2. Interacts with WIZ and EHMT2. Part of the E2F6.com-1 complex in G0 phase composed of E2F6, MGA, MAX, TFDP1, CBX3, BAT8, EHMT1, RING1, RNF2, MBLR, L3MBTL2 and YAF2. Interacts (via ANK repeats) with RELA (when monomethylated at 'Lys-310'). Interacts with MPHOSPH8. Interacts with CDYL. Interacts with REST only in the presence of CDYL. Part of a complex containing at least CDYL, REST, WIZ, SETB1, EHMT1 and EHMT2. Interacts with BAZ2B. Widely expressed.

The protein localises to the nucleus. It localises to the chromosome. The enzyme catalyses N(6)-methyl-L-lysyl(9)-[histone H3] + S-adenosyl-L-methionine = N(6),N(6)-dimethyl-L-lysyl(9)-[histone H3] + S-adenosyl-L-homocysteine + H(+). It catalyses the reaction L-lysyl(9)-[histone H3] + S-adenosyl-L-methionine = N(6)-methyl-L-lysyl(9)-[histone H3] + S-adenosyl-L-homocysteine + H(+). Its activity is regulated as follows. Methyltransferase activity is inhibited by BIX-01294. Efficiently inhibited by compound E72, a BIX-01294 derivative in which the diazepane ring and the benzyl are replaced with a 3-dimethylaminopropyl and a 5-aminopentyl group at sites B and C, respectively. Its function is as follows. Histone methyltransferase that specifically mono- and dimethylates 'Lys-9' of histone H3 (H3K9me1 and H3K9me2, respectively) in euchromatin. H3K9me represents a specific tag for epigenetic transcriptional repression by recruiting HP1 proteins to methylated histones. Also weakly methylates 'Lys-27' of histone H3 (H3K27me). Also required for DNA methylation, the histone methyltransferase activity is not required for DNA methylation, suggesting that these 2 activities function independently. Probably targeted to histone H3 by different DNA-binding proteins like E2F6, MGA, MAX and/or DP1. During G0 phase, it probably contributes to silencing of MYC- and E2F-responsive genes, suggesting a role in G0/G1 transition in cell cycle. In addition to the histone methyltransferase activity, also methylates non-histone proteins: mediates dimethylation of 'Lys-373' of p53/TP53. Represses the expression of mitochondrial function-related genes, perhaps by occupying their promoter regions, working in concert with probable chromatin reader BAZ2B. The protein is Histone-lysine N-methyltransferase EHMT1 (EHMT1) of Homo sapiens (Human).